A 411-amino-acid chain; its full sequence is Probable tRNA pseudouridine synthase D (411 aa).

The active-site Nucleophile is Asp81. The 222-residue stretch at 154–375 (GTPNFFGLQR…SGSYRPADTL (222 aa)) folds into the TRUD domain.

The protein belongs to the pseudouridine synthase TruD family.

It carries out the reaction uridine(13) in tRNA = pseudouridine(13) in tRNA. In terms of biological role, could be responsible for synthesis of pseudouridine from uracil-13 in transfer RNAs. This chain is Probable tRNA pseudouridine synthase D, found in Archaeoglobus fulgidus (strain ATCC 49558 / DSM 4304 / JCM 9628 / NBRC 100126 / VC-16).